Consider the following 622-residue polypeptide: Kelch-like protein 14 (622 aa).

The BTB domain occupies 33–145 (CDVTLTAQGQ…LYTANVTLSL (113 aa)). The segment at 73–108 (ALGPGAQDGLGGAPPKEPPPPPQEEPGTPSSSPEDK) is disordered. Pro residues predominate over residues 87–96 (PKEPPPPPQE). Kelch repeat units follow at residues 317–366 (MLLL…EVEN), 367–418 (FLFV…RLDK), 419–465 (NLYV…VHNG), 467–512 (IYIS…VMND), 514–564 (LYAI…VLDD), and 566–614 (IYLV…TVIL).

It is found in the cytoplasm. Its subcellular location is the cytosol. It localises to the endoplasmic reticulum membrane. The polypeptide is Kelch-like protein 14 (KLHL14) (Gallus gallus (Chicken)).